A 197-amino-acid polypeptide reads, in one-letter code: Holliday junction branch migration complex subunit RuvA (197 aa).

Positions 1–64 (MIGRLRGIVA…EDSVSLYGFL (64 aa)) are domain I. Positions 65–143 (REGERRLFRD…QFGAGGALPT (79 aa)) are domain II. A flexible linker region spans residues 144–153 (GSGPAPADPL). Residues 153 to 197 (LSDATVALQQLGYKPAEAARMAREAFNEGDEVAIVIRKALQSALR) are domain III.

It belongs to the RuvA family. As to quaternary structure, homotetramer. Forms an RuvA(8)-RuvB(12)-Holliday junction (HJ) complex. HJ DNA is sandwiched between 2 RuvA tetramers; dsDNA enters through RuvA and exits via RuvB. An RuvB hexamer assembles on each DNA strand where it exits the tetramer. Each RuvB hexamer is contacted by two RuvA subunits (via domain III) on 2 adjacent RuvB subunits; this complex drives branch migration. In the full resolvosome a probable DNA-RuvA(4)-RuvB(12)-RuvC(2) complex forms which resolves the HJ.

It localises to the cytoplasm. The RuvA-RuvB-RuvC complex processes Holliday junction (HJ) DNA during genetic recombination and DNA repair, while the RuvA-RuvB complex plays an important role in the rescue of blocked DNA replication forks via replication fork reversal (RFR). RuvA specifically binds to HJ cruciform DNA, conferring on it an open structure. The RuvB hexamer acts as an ATP-dependent pump, pulling dsDNA into and through the RuvAB complex. HJ branch migration allows RuvC to scan DNA until it finds its consensus sequence, where it cleaves and resolves the cruciform DNA. This chain is Holliday junction branch migration complex subunit RuvA, found in Stenotrophomonas maltophilia (strain R551-3).